The chain runs to 1061 residues: Carbamoyl phosphate synthase large chain (1061 aa).

The segment at 1 to 401 (MPKRTDVHKI…ALQKAVRSLE (401 aa)) is carboxyphosphate synthetic domain. Arg-129, Arg-169, Gly-175, Gly-176, Lys-208, Ile-210, Glu-215, Gly-241, Ile-242, His-243, Gln-284, and Glu-298 together coordinate ATP. One can recognise an ATP-grasp 1 domain in the interval 133-327 (KDLMQELNEP…IAKLAAKIAV (195 aa)). The Mg(2+) site is built by Gln-284, Glu-298, and Asn-300. The Mn(2+) site is built by Gln-284, Glu-298, and Asn-300. The tract at residues 402–546 (IDEKDLISAK…YSSYDLENES (145 aa)) is oligomerization domain. Positions 547–929 (KKSDKKSVLV…ALYKAFTGAK (383 aa)) are carbamoyl phosphate synthetic domain. In terms of domain architecture, ATP-grasp 2 spans 671–861 (DQTIKNLGLK…MAQVATRVIL (191 aa)). Positions 707, 746, 748, 752, 777, 778, 779, 780, 820, and 832 each coordinate ATP. The Mg(2+) site is built by Gln-820, Glu-832, and Asn-834. Mn(2+) is bound by residues Gln-820, Glu-832, and Asn-834. The MGS-like domain maps to 930 to 1061 (MELPDNGNVL…ENRSFATNSL (132 aa)). Residues 930-1061 (MELPDNGNVL…ENRSFATNSL (132 aa)) are allosteric domain.

Belongs to the CarB family. Composed of two chains; the small (or glutamine) chain promotes the hydrolysis of glutamine to ammonia, which is used by the large (or ammonia) chain to synthesize carbamoyl phosphate. Tetramer of heterodimers (alpha,beta)4. Mg(2+) is required as a cofactor. Mn(2+) serves as cofactor.

The catalysed reaction is hydrogencarbonate + L-glutamine + 2 ATP + H2O = carbamoyl phosphate + L-glutamate + 2 ADP + phosphate + 2 H(+). It catalyses the reaction hydrogencarbonate + NH4(+) + 2 ATP = carbamoyl phosphate + 2 ADP + phosphate + 2 H(+). It functions in the pathway amino-acid biosynthesis; L-arginine biosynthesis; carbamoyl phosphate from bicarbonate: step 1/1. The protein operates within pyrimidine metabolism; UMP biosynthesis via de novo pathway; (S)-dihydroorotate from bicarbonate: step 1/3. Its function is as follows. Large subunit of the glutamine-dependent carbamoyl phosphate synthetase (CPSase). CPSase catalyzes the formation of carbamoyl phosphate from the ammonia moiety of glutamine, carbonate, and phosphate donated by ATP, constituting the first step of 2 biosynthetic pathways, one leading to arginine and/or urea and the other to pyrimidine nucleotides. The large subunit (synthetase) binds the substrates ammonia (free or transferred from glutamine from the small subunit), hydrogencarbonate and ATP and carries out an ATP-coupled ligase reaction, activating hydrogencarbonate by forming carboxy phosphate which reacts with ammonia to form carbamoyl phosphate. The sequence is that of Carbamoyl phosphate synthase large chain from Ligilactobacillus salivarius (strain UCC118) (Lactobacillus salivarius).